The primary structure comprises 397 residues: Succinyl-diaminopimelate desuccinylase (397 aa).

Histidine 74 lines the Zn(2+) pocket. Residue aspartate 76 is part of the active site. Aspartate 107 is a binding site for Zn(2+). The active-site Proton acceptor is glutamate 141. Residues glutamate 142, glutamate 170, and histidine 368 each coordinate Zn(2+).

This sequence belongs to the peptidase M20A family. DapE subfamily. Homodimer. It depends on Zn(2+) as a cofactor. The cofactor is Co(2+).

It carries out the reaction N-succinyl-(2S,6S)-2,6-diaminopimelate + H2O = (2S,6S)-2,6-diaminopimelate + succinate. It participates in amino-acid biosynthesis; L-lysine biosynthesis via DAP pathway; LL-2,6-diaminopimelate from (S)-tetrahydrodipicolinate (succinylase route): step 3/3. Catalyzes the hydrolysis of N-succinyl-L,L-diaminopimelic acid (SDAP), forming succinate and LL-2,6-diaminopimelate (DAP), an intermediate involved in the bacterial biosynthesis of lysine and meso-diaminopimelic acid, an essential component of bacterial cell walls. This is Succinyl-diaminopimelate desuccinylase from Mesorhizobium japonicum (strain LMG 29417 / CECT 9101 / MAFF 303099) (Mesorhizobium loti (strain MAFF 303099)).